Reading from the N-terminus, the 192-residue chain is Interleukin-18 (192 aa).

Residues 1–35 (MAAIPVDDCINFVGMKFIDNTLYFVADSDENLETD) constitute a propeptide that is removed on maturation.

It belongs to the IL-1 family. In terms of assembly, forms a ternary complex with ligand-binding receptor subunit IL18R1 and signaling receptor subunit IL18RAP at the plasma membrane. Mature IL18 first binds to IL18R1 forming a low affinity binary complex, which then interacts with IL18RAP to form a high affinity ternary complex that signals inside the cell. Interacts with cargo receptor TMED10; the interaction mediates the translocation from the cytoplasm into the ERGIC (endoplasmic reticulum-Golgi intermediate compartment) and thereby secretion. In terms of processing, the pro-IL-18 precursor is processed by CASP1, CASP4 or CASP5 to yield its mature, active form. The pro-IL-18 precursor features autoinhibitory interactions between the propeptide and the post-cleavage-site region, preventing recognition by the IL18R1 receptor. Processing by CASP1, CASP4 or CASP5 induces conformational changes to generate critical receptor-binding sites. The mature form is then secreted and released in the extracellular milieu by passing through the gasdermin-D (GSDMD) pore. In contrast, cleavage by CASP3 inactivates IL18.

It localises to the cytoplasm. The protein resides in the cytosol. It is found in the secreted. Pro-inflammatory cytokine primarily involved in epithelial barrier repair, polarized T-helper 1 (Th1) cell and natural killer (NK) cell immune responses. Upon binding to IL18R1 and IL18RAP, forms a signaling ternary complex which activates NF-kappa-B, triggering synthesis of inflammatory mediators. Synergizes with IL12/interleukin-12 to induce IFNG synthesis from T-helper 1 (Th1) cells and natural killer (NK) cells. Involved in transduction of inflammation downstream of pyroptosis: its mature form is specifically released in the extracellular milieu by passing through the gasdermin-D (GSDMD) pore. The chain is Interleukin-18 (IL18) from Felis catus (Cat).